We begin with the raw amino-acid sequence, 260 residues long: Uroplakin-1b (260 aa).

At 1–15 the chain is on the cytoplasmic side; the sequence is MAKDNSTVRCFQGLL. The chain crosses the membrane as a helical span at residues 16-36; the sequence is IFGNVIIGCCGIALTAECIFF. The Extracellular segment spans residues 37–60; sequence VSDQHSLYPLLEATDNDDIYGAAW. The helical transmembrane segment at 61–81 threads the bilayer; the sequence is IGIFVGICLFCLSVLGIVGIM. Residues 82-86 are Cytoplasmic-facing; that stretch reads KSSRK. A helical membrane pass occupies residues 87-107; the sequence is ILLAYFILMFIVYAFEVASCI. Topologically, residues 108 to 229 are extracellular; the sequence is TAATQQDFFT…ELISGPMNRH (122 aa). Residues 230–250 form a helical membrane-spanning segment; it reads AWGVAWFGFAILCWTFWVLLG. Residues 251-260 are Cytoplasmic-facing; that stretch reads TMFYWSRIEY.

Belongs to the tetraspanin (TM4SF) family. Heterodimer with uroplakin-3A (UPK3A) or uroplakin-3B (UPK3B). N-glycosylated with high-mannose oligosaccharides. As to expression, bladder epithelium.

The protein resides in the membrane. Component of the asymmetric unit membrane (AUM); a highly specialized biomembrane elaborated by terminally differentiated urothelial cells. May play an important role in normal bladder epithelial physiology, possibly in regulating membrane permeability of superficial umbrella cells or in stabilizing the apical membrane through AUM/cytoskeletal interactions. The polypeptide is Uroplakin-1b (UPK1B) (Homo sapiens (Human)).